The primary structure comprises 194 residues: dCTP deaminase (194 aa).

Residues 110 to 115, aspartate 128, 136 to 138, tyrosine 171, lysine 178, and glutamine 182 contribute to the dCTP site; these read RSSLAR and VLE. Glutamate 138 serves as the catalytic Proton donor/acceptor.

The protein belongs to the dCTP deaminase family. Homotrimer.

The catalysed reaction is dCTP + H2O + H(+) = dUTP + NH4(+). The protein operates within pyrimidine metabolism; dUMP biosynthesis; dUMP from dCTP (dUTP route): step 1/2. Its function is as follows. Catalyzes the deamination of dCTP to dUTP. The sequence is that of dCTP deaminase from Pasteurella multocida (strain Pm70).